A 392-amino-acid polypeptide reads, in one-letter code: Tyrosine--tRNA ligase (392 aa).

A 'HIGH' region motif is present at residues 41-50; the sequence is PTAPDLHLGH. The 'KMSKS' region signature appears at 225–229; the sequence is KMSKS. Lys-228 serves as a coordination point for ATP. The 61-residue stretch at 330-390 folds into the S4 RNA-binding domain; that stretch reads LRAVDFLVKI…VGKKKFYRVV (61 aa).

The protein belongs to the class-I aminoacyl-tRNA synthetase family. TyrS type 2 subfamily. Homodimer.

Its subcellular location is the cytoplasm. It catalyses the reaction tRNA(Tyr) + L-tyrosine + ATP = L-tyrosyl-tRNA(Tyr) + AMP + diphosphate + H(+). In terms of biological role, catalyzes the attachment of tyrosine to tRNA(Tyr) in a two-step reaction: tyrosine is first activated by ATP to form Tyr-AMP and then transferred to the acceptor end of tRNA(Tyr). This chain is Tyrosine--tRNA ligase, found in Aquifex aeolicus (strain VF5).